The primary structure comprises 301 residues: Sulfate adenylyltransferase subunit 2 (301 aa).

This sequence belongs to the PAPS reductase family. CysD subfamily. Heterodimer composed of CysD, the smaller subunit, and CysN.

The enzyme catalyses sulfate + ATP + H(+) = adenosine 5'-phosphosulfate + diphosphate. The protein operates within sulfur metabolism; hydrogen sulfide biosynthesis; sulfite from sulfate: step 1/3. Functionally, with CysN forms the ATP sulfurylase (ATPS) that catalyzes the adenylation of sulfate producing adenosine 5'-phosphosulfate (APS) and diphosphate, the first enzymatic step in sulfur assimilation pathway. APS synthesis involves the formation of a high-energy phosphoric-sulfuric acid anhydride bond driven by GTP hydrolysis by CysN coupled to ATP hydrolysis by CysD. This Shewanella loihica (strain ATCC BAA-1088 / PV-4) protein is Sulfate adenylyltransferase subunit 2.